The primary structure comprises 101 residues: Non-histone chromosomal protein HMG-14 (101 aa).

The tract at residues 1–101 (MPKRKVSSAE…EAEEKEAKSD (101 aa)) is disordered. Position 7 is an ADP-ribosylserine (Ser7). Position 8 is a phosphoserine (Ser8). Lys14 carries the post-translational modification N6-acetyllysine. At Ser21 the chain carries Phosphoserine. Ser25 carries the post-translational modification ADP-ribosylserine; alternate. Residue Ser25 is modified to Phosphoserine; alternate. N6-acetyllysine is present on Lys27. Basic and acidic residues-rich tracts occupy residues 33-51 (VETK…DKKV) and 70-86 (ETKE…KNEE). Thr82 carries the post-translational modification Phosphothreonine. Position 83 is an N6-acetyllysine (Lys83). Residues Ser87, Ser90, and Ser100 each carry the phosphoserine modification.

This sequence belongs to the HMGN family. As to quaternary structure, interacts with transcriptional regulator SEHBP. Post-translationally, phosphorylation on Ser-21 and Ser-25 weakens binding to nucleosomes and increases the rate of H3 phosphorylation.

The protein localises to the nucleus. Its function is as follows. Binds to the inner side of the nucleosomal DNA thus altering the interaction between the DNA and the histone octamer. May be involved in the process which maintains transcribable genes in a unique chromatin conformation. Inhibits the phosphorylation of nucleosomal histones H3 and H2A by RPS6KA5/MSK1 and RPS6KA3/RSK2. The sequence is that of Non-histone chromosomal protein HMG-14 (HMGN1) from Bos taurus (Bovine).